The sequence spans 407 residues: Chorismate synthase (407 aa).

Residues Arg40 and Arg46 each coordinate NADP(+). FMN-binding positions include 138-140 and 259-260; these read RAS and QA. Over residues 275-284 the composition is skewed to basic and acidic residues; sequence RRGSRAHDEM. The tract at residues 275-308 is disordered; sequence RRGSRAHDEMYPGTDGVVRSTNRAGGLEGGMTNG. Residues Gly303, 318 to 322, and Arg344 each bind FMN; that span reads KPIST.

Belongs to the chorismate synthase family. As to quaternary structure, homotetramer. FMNH2 serves as cofactor.

The catalysed reaction is 5-O-(1-carboxyvinyl)-3-phosphoshikimate = chorismate + phosphate. Its pathway is metabolic intermediate biosynthesis; chorismate biosynthesis; chorismate from D-erythrose 4-phosphate and phosphoenolpyruvate: step 7/7. Its function is as follows. Catalyzes the anti-1,4-elimination of the C-3 phosphate and the C-6 proR hydrogen from 5-enolpyruvylshikimate-3-phosphate (EPSP) to yield chorismate, which is the branch point compound that serves as the starting substrate for the three terminal pathways of aromatic amino acid biosynthesis. This reaction introduces a second double bond into the aromatic ring system. This Mycobacterium ulcerans (strain Agy99) protein is Chorismate synthase.